A 1019-amino-acid chain; its full sequence is Insulin-degrading enzyme (1019 aa).

A Zn(2+)-binding site is contributed by His108. Glu111 functions as the Proton acceptor in the catalytic mechanism. Residues His112 and Glu189 each contribute to the Zn(2+) site. N6-succinyllysine is present on Lys192. 359–363 (LVGGQ) is a binding site for substrate. Arg429 contacts ATP. Residue Lys697 is modified to N6-succinyllysine. Positions 853 to 858 (EKPPHY) match the SlyX motif motif. Residue 895–901 (DKPKKLS) coordinates ATP.

This sequence belongs to the peptidase M16 family. As to quaternary structure, homodimer. Can also form homotetramers. The cofactor is Zn(2+).

It localises to the cytoplasm. The protein localises to the cytosol. The protein resides in the cell membrane. Its subcellular location is the secreted. The catalysed reaction is Degradation of insulin, glucagon and other polypeptides. No action on proteins.. Activated by ATP, other nucleotide triphosphates and small peptides. Inhibited by bacitracin. Functionally, plays a role in the cellular breakdown of insulin, APP peptides, IAPP peptides, natriuretic peptides, glucagon, bradykinin, kallidin, and other peptides, and thereby plays a role in intercellular peptide signaling. Substrate binding induces important conformation changes, making it possible to bind and degrade larger substrates, such as insulin. Contributes to the regulation of peptide hormone signaling cascades and regulation of blood glucose homeostasis via its role in the degradation of insulin, glucagon and IAPP. Plays a role in the degradation and clearance of APP-derived amyloidogenic peptides that are secreted by neurons and microglia. Degrades the natriuretic peptides ANP, BNP and CNP, inactivating their ability to raise intracellular cGMP. Also degrades an aberrant frameshifted 40-residue form of NPPA (fsNPPA) which is associated with familial atrial fibrillation in heterozygous patients. Involved in antigen processing. Produces both the N terminus and the C terminus of MAGEA3-derived antigenic peptide (EVDPIGHLY) that is presented to cytotoxic T lymphocytes by MHC class I. This is Insulin-degrading enzyme (IDE) from Bos taurus (Bovine).